A 682-amino-acid polypeptide reads, in one-letter code: Acyl-CoA synthetase short-chain family member 3, mitochondrial (682 aa).

Residues methionine 1–glycine 29 constitute a mitochondrion transit peptide. Glutamate 222–arginine 225 provides a ligand contact to CoA. ATP contacts are provided by residues glycine 420 to arginine 422 and aspartate 441 to threonine 446. Lysine 513 carries the N6-succinyllysine modification. Lysine 519 is modified (N6-acetyllysine). Residues aspartate 534, arginine 549, and arginine 560 each contribute to the ATP site. Residue arginine 619 participates in CoA binding.

The protein belongs to the ATP-dependent AMP-binding enzyme family.

It is found in the mitochondrion matrix. The enzyme catalyses acetate + ATP + CoA = acetyl-CoA + AMP + diphosphate. The catalysed reaction is propanoate + ATP + CoA = propanoyl-CoA + AMP + diphosphate. It carries out the reaction butanoate + ATP + CoA = butanoyl-CoA + AMP + diphosphate. In terms of biological role, catalyzes the synthesis of acetyl-CoA from short-chain fatty acids. Propionate is the preferred substrate but can also utilize acetate and butyrate with a much lower affinity. This is Acyl-CoA synthetase short-chain family member 3, mitochondrial (Acss3) from Mus musculus (Mouse).